The following is a 158-amino-acid chain: Egg cell-secreted protein 1.1 (158 aa).

A signal peptide spans Met1–Ala27. A glycan (N-linked (GlcNAc...) asparagine) is linked at Asn122.

This sequence belongs to the plant egg cell-secreted peptide family. In terms of tissue distribution, restricted to female reproductive tissues, specifically accumulating in storage vesicles of the unfertilized egg cell.

The protein resides in the cytoplasmic vesicle. It is found in the secreted. Its function is as follows. Involved in the regulation of gamete interactions during the double fertilization and to prevent multiple-pollen tube attraction; mediates the redistribution of the gamete fusogen HAP2/GCS1 to the cell surface after secretion upon sperm arrival. This chain is Egg cell-secreted protein 1.1 (EC1.1), found in Arabidopsis thaliana (Mouse-ear cress).